A 296-amino-acid polypeptide reads, in one-letter code: Nucleotide-binding protein MGAS2096_Spy0550 (296 aa).

G13 to T20 provides a ligand contact to ATP. Residue D63–S66 coordinates GTP.

This sequence belongs to the RapZ-like family.

Functionally, displays ATPase and GTPase activities. This is Nucleotide-binding protein MGAS2096_Spy0550 from Streptococcus pyogenes serotype M12 (strain MGAS2096).